Reading from the N-terminus, the 66-residue chain is Photosystem II reaction center protein J (66 aa).

The chain crosses the membrane as a helical span at residues 37–57 (LWLVATAGGMAVLFVVGLFFY).

It belongs to the PsbJ family. As to quaternary structure, PSII is composed of 1 copy each of membrane proteins PsbA, PsbB, PsbC, PsbD, PsbE, PsbF, PsbH, PsbI, PsbJ, PsbK, PsbL, PsbM, PsbT, PsbX, PsbY, PsbZ, Psb30/Ycf12, peripheral proteins PsbO, CyanoQ (PsbQ), PsbU, PsbV and a large number of cofactors. It forms dimeric complexes.

The protein localises to the cellular thylakoid membrane. One of the components of the core complex of photosystem II (PSII). PSII is a light-driven water:plastoquinone oxidoreductase that uses light energy to abstract electrons from H(2)O, generating O(2) and a proton gradient subsequently used for ATP formation. It consists of a core antenna complex that captures photons, and an electron transfer chain that converts photonic excitation into a charge separation. In Synechococcus sp. (strain WH7803), this protein is Photosystem II reaction center protein J.